An 899-amino-acid polypeptide reads, in one-letter code: MRGGAGMCFASMEAAGSRGMGKGASRRRTARSTAPVGALVERVVVAPAPVEQQRGAGRPEAHPQSVAARAVVTVRRRRKEDAKDRFAEQLDALADRVGRSVLLELVSTETDPRKGTPKKSKPSALVGWFDKKDVKAERVVYTAEFAVDAGFGEPGAVTVLNRHQREFYIESIVVEGFPTGPAHFTCNSWVQPTRVSRDRRVFFSNRPYLPSETPPGLRELRLRELADLRGDGTGERRITDRVYDYDVYNDLGNPDKGVASARPVLGGEQMPYPRRMRTGRPSTATDASAESRVEYPEPIYVSRDEEFEEGKNEMLSEGAIKALLHNFMPLLVSSVSPDIRDFAGFHDVDNLFKEGLRLKQALHDQLFQKIPFVRKIQENSEGLLRYDTPDIIKKDKFAWLRDDEFARQALAGINPVNIERLQAFPPVSKLDPAVYGPPESAITEEHIIGHLDGMSVQEAVEGSRLYMLDYHDIFLPFLDRINAQDGRKAYGTRAVFFLTAAGTLKPIAIELCLPPMTDGCKRAKRVFTPPADATSNWLWQLAKAHVCSNDAGVHQLINHWLRTHACMEPFIIAAHRQMSAMHPIFKLLKPHMRYTLKINALARQILINGDGVIESGFTPGNVCMEMSAFAYRELWRLDQEGLPADLIRRGMAVEDPSQPHGLRLLIEDYPYAADGLLLWSAISRWCEAYVAAYYPSDEAVQADYELQSWYAEAVQSGHADKRGAPWWPRLSTPGDLASLLTTLVWLCSAQHAALNFGQYPLGGYIPNRPPLMRRLVPAEGDPEYAHLVADPHRFFLSALPSLTQTTTFMTVIDTLSTHSADEEYLGERPDEAWTADPAALAAAREFAADVRRAEEEIERRNADPSRRNRCGAGVLPYELMAPSSGPGITCRGVPNSVTI.

Disordered regions lie at residues 15–34 (AGSR…RSTA), 48–68 (APVE…SVAA), and 258–291 (VASA…SAES). The 137-residue stretch at 68-204 (ARAVVTVRRR…VSRDRRVFFS (137 aa)) folds into the PLAT domain. Positions 207–899 (PYLPSETPPG…CRGVPNSVTI (693 aa)) constitute a Lipoxygenase domain. Histidine 559, histidine 564, histidine 751, asparagine 755, and isoleucine 899 together coordinate Fe cation.

The protein belongs to the lipoxygenase family. The cofactor is Fe cation.

It catalyses the reaction (9Z,12Z)-octadecadienoate + O2 = (13S)-hydroperoxy-(9Z,11E)-octadecadienoate. The catalysed reaction is (9Z,12Z,15Z)-octadecatrienoate + O2 = (13S)-hydroperoxy-(9Z,11E,15Z)-octadecatrienoate. It participates in lipid metabolism; oxylipin biosynthesis. In terms of biological role, plant lipoxygenase may be involved in a number of diverse aspects of plant physiology including growth and development, pest resistance, and senescence or responses to wounding. Catalyzes the hydroperoxidation of lipids containing a cis,cis-1,4-pentadiene structure. The sequence is that of Putative lipoxygenase 5 from Oryza sativa subsp. japonica (Rice).